A 432-amino-acid polypeptide reads, in one-letter code: Adenylosuccinate synthetase (432 aa).

GTP contacts are provided by residues glycine 13–lysine 19 and glycine 41–threonine 43. Aspartate 14 acts as the Proton acceptor in catalysis. The Mg(2+) site is built by aspartate 14 and glycine 41. IMP is bound by residues aspartate 14–lysine 17, asparagine 39–histidine 42, threonine 130, arginine 144, glutamine 225, threonine 240, and arginine 304. Histidine 42 functions as the Proton donor in the catalytic mechanism. Alanine 300–arginine 306 is a binding site for substrate. GTP is bound by residues arginine 306, lysine 332–aspartate 334, and serine 415–glycine 417.

It belongs to the adenylosuccinate synthetase family. In terms of assembly, homodimer. Mg(2+) is required as a cofactor.

The protein localises to the cytoplasm. The enzyme catalyses IMP + L-aspartate + GTP = N(6)-(1,2-dicarboxyethyl)-AMP + GDP + phosphate + 2 H(+). It functions in the pathway purine metabolism; AMP biosynthesis via de novo pathway; AMP from IMP: step 1/2. Plays an important role in the de novo pathway of purine nucleotide biosynthesis. Catalyzes the first committed step in the biosynthesis of AMP from IMP. The polypeptide is Adenylosuccinate synthetase (Klebsiella pneumoniae (strain 342)).